A 212-amino-acid chain; its full sequence is uncharacterized protein (212 aa).

Over residues 87-105 (NNNNNNNNNNNHNHNNSNN) the composition is skewed to low complexity. The disordered stretch occupies residues 87 to 107 (NNNNNNNNNNNHNHNNSNNTA).

This is an uncharacterized protein from Saccharomyces cerevisiae (strain ATCC 204508 / S288c) (Baker's yeast).